The following is a 452-amino-acid chain: Argininosuccinate lyase (452 aa).

The segment at alanine 431–alanine 452 is disordered.

It belongs to the lyase 1 family. Argininosuccinate lyase subfamily.

It localises to the cytoplasm. It carries out the reaction 2-(N(omega)-L-arginino)succinate = fumarate + L-arginine. It functions in the pathway amino-acid biosynthesis; L-arginine biosynthesis; L-arginine from L-ornithine and carbamoyl phosphate: step 3/3. In Tremblaya princeps, this protein is Argininosuccinate lyase.